The following is a 378-amino-acid chain: Putative glutamate--cysteine ligase 2 (378 aa).

It belongs to the glutamate--cysteine ligase type 2 family. YbdK subfamily.

It catalyses the reaction L-cysteine + L-glutamate + ATP = gamma-L-glutamyl-L-cysteine + ADP + phosphate + H(+). Functionally, ATP-dependent carboxylate-amine ligase which exhibits weak glutamate--cysteine ligase activity. This is Putative glutamate--cysteine ligase 2 from Salinispora arenicola (strain CNS-205).